Reading from the N-terminus, the 257-residue chain is Glutamate racemase (257 aa).

Substrate-binding positions include 12-13 (DS) and 44-45 (YG). Residue Cys75 is the Proton donor/acceptor of the active site. A substrate-binding site is contributed by 76-77 (NT). The Proton donor/acceptor role is filled by Cys185. 186–187 (TH) lines the substrate pocket.

Belongs to the aspartate/glutamate racemases family.

It carries out the reaction L-glutamate = D-glutamate. It participates in cell wall biogenesis; peptidoglycan biosynthesis. Functionally, provides the (R)-glutamate required for cell wall biosynthesis. In Clostridium botulinum (strain ATCC 19397 / Type A), this protein is Glutamate racemase.